The primary structure comprises 152 residues: Cytochrome c oxidase subunit 5A, mitochondrial (152 aa).

Residues 1–43 (MLGTALRRCAVAAAAASRAGPRGLLHPAPAPGPAAAIQSIRCY) constitute a mitochondrion transit peptide. Residues 2–22 (LGTALRRCAVAAAAASRAGPR) carry the SIFI-degron motif. K89 and K115 each carry N6-acetyllysine. T143 is modified (phosphothreonine).

This sequence belongs to the cytochrome c oxidase subunit 5A family. Component of the cytochrome c oxidase (complex IV, CIV), a multisubunit enzyme composed of 14 subunits. The complex is composed of a catalytic core of 3 subunits MT-CO1, MT-CO2 and MT-CO3, encoded in the mitochondrial DNA, and 11 supernumerary subunits COX4I, COX5A, COX5B, COX6A, COX6B, COX6C, COX7A, COX7B, COX7C, COX8 and NDUFA4, which are encoded in the nuclear genome. The complex exists as a monomer or a dimer and forms supercomplexes (SCs) in the inner mitochondrial membrane with NADH-ubiquinone oxidoreductase (complex I, CI) and ubiquinol-cytochrome c oxidoreductase (cytochrome b-c1 complex, complex III, CIII), resulting in different assemblies (supercomplex SCI(1)III(2)IV(1) and megacomplex MCI(2)III(2)IV(2)). Interacts with AFG1L. Interacts with RAB5IF. In response to mitochondrial stress, the precursor protein is ubiquitinated by the SIFI complex in the cytoplasm before mitochondrial import, leading to its degradation. Within the SIFI complex, UBR4 initiates ubiquitin chain that are further elongated or branched by KCMF1.

The protein resides in the mitochondrion inner membrane. Its pathway is energy metabolism; oxidative phosphorylation. Functionally, component of the cytochrome c oxidase, the last enzyme in the mitochondrial electron transport chain which drives oxidative phosphorylation. The respiratory chain contains 3 multisubunit complexes succinate dehydrogenase (complex II, CII), ubiquinol-cytochrome c oxidoreductase (cytochrome b-c1 complex, complex III, CIII) and cytochrome c oxidase (complex IV, CIV), that cooperate to transfer electrons derived from NADH and succinate to molecular oxygen, creating an electrochemical gradient over the inner membrane that drives transmembrane transport and the ATP synthase. Cytochrome c oxidase is the component of the respiratory chain that catalyzes the reduction of oxygen to water. Electrons originating from reduced cytochrome c in the intermembrane space (IMS) are transferred via the dinuclear copper A center (CU(A)) of subunit 2 and heme A of subunit 1 to the active site in subunit 1, a binuclear center (BNC) formed by heme A3 and copper B (CU(B)). The BNC reduces molecular oxygen to 2 water molecules using 4 electrons from cytochrome c in the IMS and 4 protons from the mitochondrial matrix. The chain is Cytochrome c oxidase subunit 5A, mitochondrial (COX5A) from Eulemur fulvus fulvus (Brown lemur).